The chain runs to 274 residues: Tyrosinase (274 aa).

His-38, His-54, His-63, His-190, His-194, and His-216 together coordinate Cu cation.

This sequence belongs to the tyrosinase family. It depends on Cu(2+) as a cofactor.

It catalyses the reaction 2 L-dopa + O2 = 2 L-dopaquinone + 2 H2O. The catalysed reaction is L-tyrosine + O2 = L-dopaquinone + H2O. Its function is as follows. This is a copper-containing oxidase that functions in the formation of pigments such as melanins and other polyphenolic compounds. The polypeptide is Tyrosinase (melC2) (Streptomyces glaucescens).